A 92-amino-acid chain; its full sequence is MGRSLKKAPFVDEHLMKKVEAQAHDEKKKVIKTWSRRSTIFPSFIGYTIAVYDGRKHVPVYIQEDMVGHKLGEFAPTRTYKGHAADDKKTRR.

This sequence belongs to the universal ribosomal protein uS19 family.

Protein S19 forms a complex with S13 that binds strongly to the 16S ribosomal RNA. In Streptococcus pyogenes serotype M49 (strain NZ131), this protein is Small ribosomal subunit protein uS19.